We begin with the raw amino-acid sequence, 365 residues long: Aminomethyltransferase (365 aa).

This sequence belongs to the GcvT family. The glycine cleavage system is composed of four proteins: P, T, L and H.

The enzyme catalyses N(6)-[(R)-S(8)-aminomethyldihydrolipoyl]-L-lysyl-[protein] + (6S)-5,6,7,8-tetrahydrofolate = N(6)-[(R)-dihydrolipoyl]-L-lysyl-[protein] + (6R)-5,10-methylene-5,6,7,8-tetrahydrofolate + NH4(+). In terms of biological role, the glycine cleavage system catalyzes the degradation of glycine. The protein is Aminomethyltransferase of Yersinia enterocolitica serotype O:8 / biotype 1B (strain NCTC 13174 / 8081).